A 247-amino-acid polypeptide reads, in one-letter code: uncharacterized protein (247 aa).

Positions 1 to 35 (MWGPGVTAEGLSVAPAPPPLLPLLLLLALALVAPS) are cleaved as a signal peptide. Asparagine 57 carries N-linked (GlcNAc...) asparagine glycosylation. A helical membrane pass occupies residues 82-102 (LSGLLILLVLFAIGYFLQRII). The interval 109-179 (YPRGQARPGQ…GGRSDPSCAS (71 aa)) is disordered. The span at 160-172 (SGGGGRGRGGGGR) shows a compositional bias: gly residues.

It localises to the membrane. This is an uncharacterized protein from Homo sapiens (Human).